An 802-amino-acid chain; its full sequence is Cullin-4 (802 aa).

2 stretches are compositionally biased toward low complexity: residues 1–33 and 656–676; these read MNFNNNNNNNNNNNNNNNLNNNNNNVNNINNNN and STSSNTSSNTSSNTSSSASGS. 2 disordered regions span residues 1–43 and 656–686; these read MNFN…SLAG and STSSNTSSNTSSNTSSSASGSASGGASGGAT. The Cullin neddylation domain maps to 734 to 794; that stretch reads DRQYQVDAAI…KEYLCRDPEN (61 aa). A Glycyl lysine isopeptide (Lys-Gly) (interchain with G-Cter in NEDD8) cross-link involves residue Lys-748.

Belongs to the cullin family. In terms of processing, neddylated. Deneddylated via its interaction with the COP9 signalosome (CSN) complex.

It participates in protein modification; protein ubiquitination. Functionally, probable core component of cullin-based SCF-like E3 ubiquitin-protein ligase complexes which mediate the ubiquitination and subsequent proteasomal degradation of target proteins. The E3 ubiquitin-protein ligase activity of the complex is dependent on the neddylation of the cullin subunit. This chain is Cullin-4 (culD), found in Dictyostelium discoideum (Social amoeba).